A 317-amino-acid chain; its full sequence is Melanoma-associated antigen 4 (317 aa).

Residues 1–14 show a composition bias toward basic and acidic residues; sequence MSSEQKSQHCKPEE. The segment at 1–102 is disordered; that stretch reads MSSEQKSQHC…EEGPSTSPDA (102 aa). The span at 66–82 shows a compositional bias: polar residues; the sequence is PQGASALPTTISFTCWR. An MAGE domain is found at 110-309; that stretch reads LSNKVDELAH…IAYPSLREAA (200 aa).

Expressed in many tumors of several types, such as melanoma, head and neck squamous cell carcinoma, lung carcinoma and breast carcinoma, but not in normal tissues except for testes and placenta.

Its function is as follows. Regulates cell proliferation through the inhibition of cell cycle arrest at the G1 phase. Also negatively regulates p53-mediated apoptosis. This chain is Melanoma-associated antigen 4 (MAGEA4), found in Homo sapiens (Human).